Reading from the N-terminus, the 165-residue chain is Ribosome maturation factor RimM (165 aa).

Positions 90-161 (PDTYYVSDLK…KIIIKPVGEW (72 aa)) constitute a PRC barrel domain.

It belongs to the RimM family. As to quaternary structure, binds ribosomal protein uS19.

The protein localises to the cytoplasm. Functionally, an accessory protein needed during the final step in the assembly of 30S ribosomal subunit, possibly for assembly of the head region. Essential for efficient processing of 16S rRNA. May be needed both before and after RbfA during the maturation of 16S rRNA. It has affinity for free ribosomal 30S subunits but not for 70S ribosomes. The chain is Ribosome maturation factor RimM from Clostridium beijerinckii (strain ATCC 51743 / NCIMB 8052) (Clostridium acetobutylicum).